We begin with the raw amino-acid sequence, 252 residues long: Protein PYRAB15930 (252 aa).

The protein belongs to the CinA family.

This chain is Protein PYRAB15930, found in Pyrococcus abyssi (strain GE5 / Orsay).